Here is a 120-residue protein sequence, read N- to C-terminus: Ribonuclease P protein component (120 aa).

This sequence belongs to the RnpA family. In terms of assembly, consists of a catalytic RNA component (M1 or rnpB) and a protein subunit.

The catalysed reaction is Endonucleolytic cleavage of RNA, removing 5'-extranucleotides from tRNA precursor.. RNaseP catalyzes the removal of the 5'-leader sequence from pre-tRNA to produce the mature 5'-terminus. It can also cleave other RNA substrates such as 4.5S RNA. The protein component plays an auxiliary but essential role in vivo by binding to the 5'-leader sequence and broadening the substrate specificity of the ribozyme. This Desulfotalea psychrophila (strain LSv54 / DSM 12343) protein is Ribonuclease P protein component.